A 105-amino-acid polypeptide reads, in one-letter code: Small ribosomal subunit protein uS10 (105 aa).

The protein belongs to the universal ribosomal protein uS10 family. As to quaternary structure, part of the 30S ribosomal subunit.

In terms of biological role, involved in the binding of tRNA to the ribosomes. The sequence is that of Small ribosomal subunit protein uS10 from Francisella philomiragia subsp. philomiragia (strain ATCC 25017 / CCUG 19701 / FSC 153 / O#319-036).